The sequence spans 384 residues: PqqA peptide cyclase (384 aa).

A Radical SAM core domain is found at 14–226 (IPAPVGLLAE…IRIVEAARER (213 aa)). Residues cysteine 28, cysteine 32, and cysteine 35 each coordinate [4Fe-4S] cluster.

It belongs to the radical SAM superfamily. PqqE family. In terms of assembly, interacts with PqqD. The interaction is necessary for activity of PqqE. [4Fe-4S] cluster serves as cofactor.

It carries out the reaction [PQQ precursor protein] + S-adenosyl-L-methionine = E-Y cross-linked-[PQQ precursor protein] + 5'-deoxyadenosine + L-methionine + H(+). The protein operates within cofactor biosynthesis; pyrroloquinoline quinone biosynthesis. Its function is as follows. Catalyzes the cross-linking of a glutamate residue and a tyrosine residue in the PqqA protein as part of the biosynthesis of pyrroloquinoline quinone (PQQ). The sequence is that of PqqA peptide cyclase from Methylorubrum populi (strain ATCC BAA-705 / NCIMB 13946 / BJ001) (Methylobacterium populi).